The sequence spans 261 residues: 5-hmdU DNA kinase (261 aa).

The protein belongs to the thymidylate kinase family. 5-hmdU DNA kinase subfamily.

It catalyses the reaction 5-hydroxymethyl-dUMP in DNA + ATP = 5-phosphomethyl-dUMP in DNA + ADP + H(+). Its function is as follows. Phosphorylates 5-hydroxymethyluracil (5hmdU) into 5-phosphomethyl-2'-deoxyuridine (5- PmdU) on DNA as a step in the pathway leading to thymidine hypermodifications in the viral genome. As a final result of the pathway of hypermodification, 5-Nalpha-putrescinylthymidine (Nalpha-PutT) substitutes for about 50% of thymidines in the viral DNA. These modifications probably prevent degradation of viral genome by the host restriction-modification antiviral defense system. The chain is 5-hmdU DNA kinase from Delftia phage PhiW-14 (Deftia acidovorans bacteriophage phiW-14).